A 598-amino-acid chain; its full sequence is Elongation factor 4 (598 aa).

In terms of domain architecture, tr-type G spans 2-184; the sequence is TKIRNFSIIA…AVVDRIPPPS (183 aa). GTP-binding positions include 14–19 and 131–134; these read DHGKST and NKID.

This sequence belongs to the TRAFAC class translation factor GTPase superfamily. Classic translation factor GTPase family. LepA subfamily.

The protein resides in the cell inner membrane. It catalyses the reaction GTP + H2O = GDP + phosphate + H(+). In terms of biological role, required for accurate and efficient protein synthesis under certain stress conditions. May act as a fidelity factor of the translation reaction, by catalyzing a one-codon backward translocation of tRNAs on improperly translocated ribosomes. Back-translocation proceeds from a post-translocation (POST) complex to a pre-translocation (PRE) complex, thus giving elongation factor G a second chance to translocate the tRNAs correctly. Binds to ribosomes in a GTP-dependent manner. This is Elongation factor 4 from Syntrophobacter fumaroxidans (strain DSM 10017 / MPOB).